The primary structure comprises 468 residues: Bifunctional protein HldE (468 aa).

Residues 1 to 315 (MAKKVEILVV…ELLRSRANAE (315 aa)) form a ribokinase region. 192 to 195 (NRKE) lines the ATP pocket. D260 is an active-site residue. The segment at 340–468 (FTNGCFDILH…IVKRIKDADK (129 aa)) is cytidylyltransferase.

It in the N-terminal section; belongs to the carbohydrate kinase PfkB family. The protein in the C-terminal section; belongs to the cytidylyltransferase family. Homodimer.

The enzyme catalyses D-glycero-beta-D-manno-heptose 7-phosphate + ATP = D-glycero-beta-D-manno-heptose 1,7-bisphosphate + ADP + H(+). It carries out the reaction D-glycero-beta-D-manno-heptose 1-phosphate + ATP + H(+) = ADP-D-glycero-beta-D-manno-heptose + diphosphate. The protein operates within nucleotide-sugar biosynthesis; ADP-L-glycero-beta-D-manno-heptose biosynthesis; ADP-L-glycero-beta-D-manno-heptose from D-glycero-beta-D-manno-heptose 7-phosphate: step 1/4. It participates in nucleotide-sugar biosynthesis; ADP-L-glycero-beta-D-manno-heptose biosynthesis; ADP-L-glycero-beta-D-manno-heptose from D-glycero-beta-D-manno-heptose 7-phosphate: step 3/4. Functionally, catalyzes the phosphorylation of D-glycero-D-manno-heptose 7-phosphate at the C-1 position to selectively form D-glycero-beta-D-manno-heptose-1,7-bisphosphate. Catalyzes the ADP transfer from ATP to D-glycero-beta-D-manno-heptose 1-phosphate, yielding ADP-D-glycero-beta-D-manno-heptose. This is Bifunctional protein HldE from Campylobacter curvus (strain 525.92).